A 183-amino-acid chain; its full sequence is Dermatopontin (183 aa).

Q1 carries the post-translational modification Pyrrolidone carboxylic acid. A Sulfotyrosine modification is found at Y5. A run of 4 repeats spans residues 8–61 (PYQQ…ACMP), 52–57 (DRQWNY), 62–117 (TPQS…CCRY), and 107–112 (DREWQF). Residues 8 to 117 (PYQQYHDYSD…REWQFYCCRY (110 aa)) form a 2 X 53-55 AA tandem repeats region. 5 disulfides stabilise this stretch: C32-C59, C72-C114, C88-C115, C121-C178, and C125-C171. The segment at 52 to 168 (DRQWNYACMP…AVERDRQWKF (117 aa)) is 3 X 6 AA tandem repeats of D-R-[EQ]-W-[NQK]-[FY]. Sulfotyrosine occurs at positions 144, 146, 148, and 149. The stretch at 163-168 (DRQWKF) is one 2-3 repeat. Residue Y176 is modified to Sulfotyrosine.

The protein belongs to the dermatopontin family. In terms of assembly, interacts with TGFB1, DCN and collagen. Post-translationally, sulfated on tyrosine residue(s). Detected in skin, skeletal muscle, heart, lung, articular cartilage, long bone and calvaria. Smaller amounts detected in kidney. Not detected in brain, liver or spleen.

It is found in the secreted. It localises to the extracellular space. The protein localises to the extracellular matrix. Seems to mediate adhesion by cell surface integrin binding. May serve as a communication link between the dermal fibroblast cell surface and its extracellular matrix environment. Enhances TGFB1 activity. Inhibits cell proliferation. Accelerates collagen fibril formation, and stabilizes collagen fibrils against low-temperature dissociation. This is Dermatopontin (DPT) from Sus scrofa (Pig).